Here is a 286-residue protein sequence, read N- to C-terminus: tRNA (guanine-N(7)-)-methyltransferase (286 aa).

A disordered region spans residues 1-21; the sequence is MTNPESTAIDPVAAMGTDHTE. 4 residues coordinate S-adenosyl-L-methionine: Glu91, Glu116, Asn143, and Asp165. Asp165 is a catalytic residue. Residues Lys169, Asp201, and 262–265 each bind substrate; that span reads TNFE.

Belongs to the class I-like SAM-binding methyltransferase superfamily. TrmB family.

It carries out the reaction guanosine(46) in tRNA + S-adenosyl-L-methionine = N(7)-methylguanosine(46) in tRNA + S-adenosyl-L-homocysteine. Its pathway is tRNA modification; N(7)-methylguanine-tRNA biosynthesis. In terms of biological role, catalyzes the formation of N(7)-methylguanine at position 46 (m7G46) in tRNA. In Bifidobacterium longum (strain NCC 2705), this protein is tRNA (guanine-N(7)-)-methyltransferase.